Reading from the N-terminus, the 266-residue chain is UPF0354 protein lwe1624 (266 aa).

The protein belongs to the UPF0354 family.

This is UPF0354 protein lwe1624 from Listeria welshimeri serovar 6b (strain ATCC 35897 / DSM 20650 / CCUG 15529 / CIP 8149 / NCTC 11857 / SLCC 5334 / V8).